The following is a 132-amino-acid chain: Small ribosomal subunit protein uS11 (132 aa).

The protein belongs to the universal ribosomal protein uS11 family. In terms of assembly, part of the 30S ribosomal subunit. Interacts with proteins S7 and S18. Binds to IF-3.

Its function is as follows. Located on the platform of the 30S subunit, it bridges several disparate RNA helices of the 16S rRNA. Forms part of the Shine-Dalgarno cleft in the 70S ribosome. This is Small ribosomal subunit protein uS11 from Chlamydia felis (strain Fe/C-56) (Chlamydophila felis).